The primary structure comprises 352 residues: N-acetyl-gamma-glutamyl-phosphate reductase (352 aa).

The active site involves Cys155.

Belongs to the NAGSA dehydrogenase family. Type 1 subfamily.

The protein resides in the cytoplasm. The catalysed reaction is N-acetyl-L-glutamate 5-semialdehyde + phosphate + NADP(+) = N-acetyl-L-glutamyl 5-phosphate + NADPH + H(+). It participates in amino-acid biosynthesis; L-arginine biosynthesis; N(2)-acetyl-L-ornithine from L-glutamate: step 3/4. Its function is as follows. Catalyzes the NADPH-dependent reduction of N-acetyl-5-glutamyl phosphate to yield N-acetyl-L-glutamate 5-semialdehyde. In Synechococcus elongatus (strain ATCC 33912 / PCC 7942 / FACHB-805) (Anacystis nidulans R2), this protein is N-acetyl-gamma-glutamyl-phosphate reductase.